The sequence spans 262 residues: Acyl-[acyl-carrier-protein]--UDP-N-acetylglucosamine O-acyltransferase (262 aa).

It belongs to the transferase hexapeptide repeat family. LpxA subfamily. As to quaternary structure, homotrimer.

The protein localises to the cytoplasm. The enzyme catalyses a (3R)-hydroxyacyl-[ACP] + UDP-N-acetyl-alpha-D-glucosamine = a UDP-3-O-[(3R)-3-hydroxyacyl]-N-acetyl-alpha-D-glucosamine + holo-[ACP]. It participates in glycolipid biosynthesis; lipid IV(A) biosynthesis; lipid IV(A) from (3R)-3-hydroxytetradecanoyl-[acyl-carrier-protein] and UDP-N-acetyl-alpha-D-glucosamine: step 1/6. Involved in the biosynthesis of lipid A, a phosphorylated glycolipid that anchors the lipopolysaccharide to the outer membrane of the cell. The chain is Acyl-[acyl-carrier-protein]--UDP-N-acetylglucosamine O-acyltransferase from Salmonella schwarzengrund (strain CVM19633).